The chain runs to 1045 residues: Extracellular serine protease (1045 aa).

Residues Met-1 to Ala-27 form the signal peptide. The 349-residue stretch at Gln-49–Ile-397 folds into the Peptidase S8 domain. Catalysis depends on charge relay system residues Asp-76, His-112, and Ser-341. A propeptide spans Ser-646 to Phe-1045 (translocator domain; removed in mature form). One can recognise an Autotransporter domain in the interval Ile-769–Phe-1045.

This sequence belongs to the peptidase S8 family.

Its subcellular location is the secreted. The chain is Extracellular serine protease from Serratia marcescens.